The primary structure comprises 47 residues: Lysis protein for colicin E8 (47 aa).

The N-terminal stretch at 1-19 (MKKITGIILLLLAVIILAA) is a signal peptide. Cys20 is lipidated: N-palmitoyl cysteine. Cys20 carries S-diacylglycerol cysteine lipidation.

It is found in the cell outer membrane. Lysis proteins are required for both colicin release and partial cell lysis. The polypeptide is Lysis protein for colicin E8 (lys) (Escherichia coli).